The primary structure comprises 291 residues: NAD kinase (291 aa).

Residue Asp73 is the Proton acceptor of the active site. Residues 73 to 74 (DG), 147 to 148 (ND), Arg175, Asp177, 188 to 193 (TAYALS), Ala212, and Gln246 each bind NAD(+).

Belongs to the NAD kinase family. Requires a divalent metal cation as cofactor.

It localises to the cytoplasm. It catalyses the reaction NAD(+) + ATP = ADP + NADP(+) + H(+). In terms of biological role, involved in the regulation of the intracellular balance of NAD and NADP, and is a key enzyme in the biosynthesis of NADP. Catalyzes specifically the phosphorylation on 2'-hydroxyl of the adenosine moiety of NAD to yield NADP. The polypeptide is NAD kinase (Polaromonas naphthalenivorans (strain CJ2)).